A 156-amino-acid polypeptide reads, in one-letter code: Probable low-salt glycan biosynthesis epimerase Agl13 (156 aa).

Substrate-binding positions include arginine 19, glutamate 24, 39-41 (MSY), arginine 51, histidine 54, and histidine 109.

It belongs to the dTDP-4-dehydrorhamnose 3,5-epimerase family.

It functions in the pathway protein modification; protein glycosylation. Its pathway is cell surface structure biogenesis; S-layer biogenesis. Functionally, epimerase involved in N-glycan biosynthetic pathway that takes place under low-salt conditions (1.75 M instead of 3.4 M). Participates in the formation of the tetrasaccharide present at 'Asn-532' of S-layer glycoprotein Csg, consisting of a sulfated hexose, 2 hexoses and rhamnose. Involved in the addition of final rhamnose (sugar 4) of the tetrasaccharide on the dolichol phosphate carrier. The chain is Probable low-salt glycan biosynthesis epimerase Agl13 (agl13) from Haloferax volcanii (strain ATCC 29605 / DSM 3757 / JCM 8879 / NBRC 14742 / NCIMB 2012 / VKM B-1768 / DS2) (Halobacterium volcanii).